The chain runs to 308 residues: Glycerol-3-phosphate dehydrogenase [NAD(P)+] (308 aa).

3 residues coordinate NADPH: Trp-13, Arg-33, and Lys-81. 2 residues coordinate sn-glycerol 3-phosphate: Lys-81 and Gly-109. Ala-113 provides a ligand contact to NADPH. Residues Lys-163, Asp-216, Ser-226, Arg-227, and Asn-228 each contribute to the sn-glycerol 3-phosphate site. Lys-163 functions as the Proton acceptor in the catalytic mechanism. Arg-227 provides a ligand contact to NADPH. Glu-253 provides a ligand contact to NADPH.

It belongs to the NAD-dependent glycerol-3-phosphate dehydrogenase family.

Its subcellular location is the cytoplasm. It catalyses the reaction sn-glycerol 3-phosphate + NAD(+) = dihydroxyacetone phosphate + NADH + H(+). It carries out the reaction sn-glycerol 3-phosphate + NADP(+) = dihydroxyacetone phosphate + NADPH + H(+). It participates in membrane lipid metabolism; glycerophospholipid metabolism. Catalyzes the reduction of the glycolytic intermediate dihydroxyacetone phosphate (DHAP) to sn-glycerol 3-phosphate (G3P), the key precursor for phospholipid synthesis. The polypeptide is Glycerol-3-phosphate dehydrogenase [NAD(P)+] (Thermosynechococcus vestitus (strain NIES-2133 / IAM M-273 / BP-1)).